The chain runs to 993 residues: Glycogen phosphorylase 2 (993 aa).

The interval 1–82 is disordered; sequence MEEKRSTNSP…SNQSEDPATQ (82 aa). The segment covering 19 to 48 has biased composition (polar residues); it reads RSGSITSATSHPPRSNSNPKLVAKHQQQLY. Residues 58–77 show a composition bias toward low complexity; sequence EQQNQQPQQQQQKQTSNQSE. N6-(pyridoxal phosphate)lysine is present on K763. The segment covering 962–981 has biased composition (polar residues); the sequence is VISGGDKTNNTLKPKQTTKG. Positions 962-993 are disordered; sequence VISGGDKTNNTLKPKQTTKGFNIGGQPGNPTN. A compositionally biased stretch (gly residues) spans 983-993; it reads NIGGQPGNPTN.

The protein belongs to the glycogen phosphorylase family. In terms of assembly, homodimer. The cofactor is pyridoxal 5'-phosphate. In terms of processing, the N-terminus is blocked. Post-translationally, enzyme activity requires processing of the 113 kDa peptide to an enzymatically active 106 kDa form of the protein. Processing would occur near the middle of the Gln-rich repetitive element.

The enzyme catalyses [(1-&gt;4)-alpha-D-glucosyl](n) + phosphate = [(1-&gt;4)-alpha-D-glucosyl](n-1) + alpha-D-glucose 1-phosphate. Functionally, phosphorylase is an important allosteric enzyme in carbohydrate metabolism. Enzymes from different sources differ in their regulatory mechanisms and in their natural substrates. However, all known phosphorylases share catalytic and structural properties. The protein is Glycogen phosphorylase 2 (glpD) of Dictyostelium discoideum (Social amoeba).